A 268-amino-acid chain; its full sequence is Mitochondrial distribution and morphology protein 12 (268 aa).

An SMP-LTD domain is found at 1–266; sequence MSIDLEWCKL…FPNFHTIVMA (266 aa). Positions 66–136 are disordered; the sequence is EDDEEGSDRG…PPPAENPHPN (71 aa). Residues 102 to 111 show a composition bias toward polar residues; it reads PATNVTSSLD. The span at 112-121 shows a compositional bias: basic and acidic residues; sequence TRSDQPDDQK.

This sequence belongs to the MDM12 family. In terms of assembly, component of the ER-mitochondria encounter structure (ERMES) or MDM complex, composed of MMM1, MDM10, MDM12 and MDM34. An MMM1 homodimer associates with one molecule of MDM12 on each side in a pairwise head-to-tail manner, and the SMP-LTD domains of MMM1 and MDM12 generate a continuous hydrophobic tunnel for phospholipid trafficking.

It localises to the mitochondrion outer membrane. The protein resides in the endoplasmic reticulum membrane. Functionally, component of the ERMES/MDM complex, which serves as a molecular tether to connect the endoplasmic reticulum (ER) and mitochondria. Components of this complex are involved in the control of mitochondrial shape and protein biogenesis, and function in nonvesicular lipid trafficking between the ER and mitochondria. MDM12 is required for the interaction of the ER-resident membrane protein MMM1 and the outer mitochondrial membrane-resident beta-barrel protein MDM10. The MDM12-MMM1 subcomplex functions in the major beta-barrel assembly pathway that is responsible for biogenesis of all mitochondrial outer membrane beta-barrel proteins, and acts in a late step after the SAM complex. The MDM10-MDM12-MMM1 subcomplex further acts in the TOM40-specific pathway after the action of the MDM12-MMM1 complex. Essential for establishing and maintaining the structure of mitochondria and maintenance of mtDNA nucleoids. The polypeptide is Mitochondrial distribution and morphology protein 12 (Laccaria bicolor (strain S238N-H82 / ATCC MYA-4686) (Bicoloured deceiver)).